Here is a 950-residue protein sequence, read N- to C-terminus: Kinase suppressor of Ras 2 (950 aa).

Residues proline 239 to arginine 296 are disordered. Residues arginine 259–proline 273 show a composition bias toward low complexity. A phosphothreonine mark is found at threonine 272 and threonine 276. A Phorbol-ester/DAG-type zinc finger spans residues lysine 412–cysteine 456. Histidine 413, cysteine 425, cysteine 428, cysteine 438, cysteine 441, histidine 446, cysteine 449, and cysteine 456 together coordinate Zn(2+). Serine 474 carries the phosphoserine; by MARK3 modification. A Phosphothreonine modification is found at threonine 497. The interval leucine 498–glutamine 556 is disordered. Residues serine 517–serine 530 show a composition bias toward low complexity. Residues serine 531–proline 548 show a composition bias toward pro residues. Positions leucine 666 to leucine 931 constitute a Protein kinase domain. Isoleucine 672–valine 680 contributes to the ATP binding site. The active-site Proton donor/acceptor is aspartate 786. Residues lysine 788 and aspartate 803 each contribute to the ATP site.

Belongs to the protein kinase superfamily. TKL Ser/Thr protein kinase family. As to quaternary structure, heterodimerizes (via N-terminus) with BRAF (via N-terminus) in a MAP2K1/MEK1-dependent manner. Interacts with BRAF; this increases the low intrinsic protein kinase activity of KSR2. Interacts with MAP2K1, forming a heterodimer that can dimerize to form a heterotetramer. Interacts with MAP3K8, MAPK, RAS and RAF. Post-translationally, phosphorylated on Ser-474 by MARK3. Mainly expressed in brain and kidney.

The protein localises to the cytoplasm. The protein resides in the membrane. It catalyses the reaction L-seryl-[protein] + ATP = O-phospho-L-seryl-[protein] + ADP + H(+). It carries out the reaction L-threonyl-[protein] + ATP = O-phospho-L-threonyl-[protein] + ADP + H(+). Its activity is regulated as follows. Kinase activity is inhibited by ASC24. Location-regulated scaffold connecting MEK to RAF. Has very low protein kinase activity and can phosphorylate MAP2K1 at several Ser and Thr residues with very low efficiency (in vitro). Acts as MAP2K1/MEK1-dependent allosteric activator of BRAF; upon binding to MAP2K1/MEK1, dimerizes with BRAF and promotes BRAF-mediated phosphorylation of MAP2K1/MEK1. Interaction with BRAF enhances KSR2-mediated phosphorylation of MAP2K1 (in vitro). Blocks MAP3K8 kinase activity and MAP3K8-mediated signaling. Acts as a negative regulator of MAP3K3-mediated activation of ERK, JNK and NF-kappa-B pathways, inhibiting MAP3K3-mediated interleukin-8 production. This Homo sapiens (Human) protein is Kinase suppressor of Ras 2.